A 309-amino-acid polypeptide reads, in one-letter code: Probable ABC transporter permease protein y4oQ (309 aa).

A run of 7 helical transmembrane segments spans residues 25-45 (VVWF…VPLV), 89-109 (LIYA…FAVL), 123-143 (LMLI…KLLY), 174-194 (VIIV…LAGL), 221-241 (LPHL…GVMA), 246-266 (IFLL…VYAY), and 278-298 (TTAI…PLIW). The ABC transmembrane type-1 domain maps to 85–296 (IRVTLIYAVV…VFVLAISAPL (212 aa)).

The protein belongs to the binding-protein-dependent transport system permease family. MalFG subfamily.

It localises to the cell inner membrane. Its function is as follows. Probably part of the binding-protein-dependent transport system y4oPQRS. This system probably transports a sugar-like molecule. Probably responsible for the translocation of the substrate across the membrane. The chain is Probable ABC transporter permease protein y4oQ from Sinorhizobium fredii (strain NBRC 101917 / NGR234).